We begin with the raw amino-acid sequence, 84 residues long: Small ribosomal subunit protein uS17 (84 aa).

This sequence belongs to the universal ribosomal protein uS17 family. Part of the 30S ribosomal subunit.

One of the primary rRNA binding proteins, it binds specifically to the 5'-end of 16S ribosomal RNA. This Erwinia tasmaniensis (strain DSM 17950 / CFBP 7177 / CIP 109463 / NCPPB 4357 / Et1/99) protein is Small ribosomal subunit protein uS17.